Reading from the N-terminus, the 413-residue chain is N5-carboxyaminoimidazole ribonucleotide synthase (413 aa).

Residues 1–21 (MKRVSEQAGNPDGNPQAHVPG) are disordered. Residues Lys-122, Lys-162, 199–202 (EEKV), Glu-207, and 289–290 (NE) each bind ATP. In terms of domain architecture, ATP-grasp spans 126–319 (RERLAELGAP…QFEQHLRAVM (194 aa)).

Belongs to the PurK/PurT family. Homodimer.

The enzyme catalyses 5-amino-1-(5-phospho-beta-D-ribosyl)imidazole + hydrogencarbonate + ATP = 5-carboxyamino-1-(5-phospho-D-ribosyl)imidazole + ADP + phosphate + 2 H(+). Its pathway is purine metabolism; IMP biosynthesis via de novo pathway; 5-amino-1-(5-phospho-D-ribosyl)imidazole-4-carboxylate from 5-amino-1-(5-phospho-D-ribosyl)imidazole (N5-CAIR route): step 1/2. Catalyzes the ATP-dependent conversion of 5-aminoimidazole ribonucleotide (AIR) and HCO(3)(-) to N5-carboxyaminoimidazole ribonucleotide (N5-CAIR). In Corynebacterium ammoniagenes (Brevibacterium ammoniagenes), this protein is N5-carboxyaminoimidazole ribonucleotide synthase.